A 236-amino-acid polypeptide reads, in one-letter code: Ascorbate-specific transmembrane electron transporter 2 (236 aa).

Topologically, residues 1–13 (MGLGLGVRAAPFT) are cytoplasmic. The helical transmembrane segment at 14–34 (YAAHALAVAAAAMVLVWAIYF) threads the bilayer. In terms of domain architecture, Cytochrome b561 spans 15–219 (AAHALAVAAA…FGASVVVAAI (205 aa)). At 35 to 50 (RGGLAIEATNKNLIFN) the chain is on the extracellular side. Residues 51-71 (VHPVLMLIGYIIIGGEAIMVY) traverse the membrane as a helical segment. Histidine 52 provides a ligand contact to heme b. 67–75 (AIMVYRVLP) serves as a coordination point for L-ascorbate. Topologically, residues 72 to 84 (RVLPTSNHETNKL) are cytoplasmic. The chain crosses the membrane as a helical span at residues 85–105 (IHLVLHGIALVLGAVGIYFAF). Positions 86 and 120 each coordinate heme b. Over 106–122 (KNHNESGIANLYSLHSW) the chain is Extracellular. Residue 116–125 (LYSLHSWIGI) coordinates monodehydro-L-ascorbate radical. The chain crosses the membrane as a helical span at residues 123 to 143 (IGIGTITLYGIQWIVGFVTFF). The Cytoplasmic portion of the chain corresponds to 144–153 (FPGAAPNVKK). The chain crosses the membrane as a helical span at residues 154 to 174 (GVLPWHILFGLFVYILALANA). Histidine 159 lines the heme b pocket. The Extracellular portion of the chain corresponds to 175-201 (ELGFLEKLTFLESSGLDKYGTEAFLVN). Residues 202 to 222 (FTALVVVLFGASVVVAAIAPV) traverse the membrane as a helical segment. The Cytoplasmic portion of the chain corresponds to 223–236 (RLEEPQGYVPIPEN).

Heme b is required as a cofactor.

It is found in the membrane. Functionally, two-heme-containing cytochrome. Catalyzes ascorbate-dependent trans-membrane electron transfer by utilizing a concerted H(+)/e(-) transfer mechanism. The protein is Ascorbate-specific transmembrane electron transporter 2 of Zea mays (Maize).